Reading from the N-terminus, the 232-residue chain is Enolase-phosphatase E1 (232 aa).

The protein belongs to the HAD-like hydrolase superfamily. MasA/MtnC family. As to quaternary structure, monomer. It depends on Mg(2+) as a cofactor.

It carries out the reaction 5-methylsulfanyl-2,3-dioxopentyl phosphate + H2O = 1,2-dihydroxy-5-(methylsulfanyl)pent-1-en-3-one + phosphate. Its pathway is amino-acid biosynthesis; L-methionine biosynthesis via salvage pathway; L-methionine from S-methyl-5-thio-alpha-D-ribose 1-phosphate: step 3/6. It functions in the pathway amino-acid biosynthesis; L-methionine biosynthesis via salvage pathway; L-methionine from S-methyl-5-thio-alpha-D-ribose 1-phosphate: step 4/6. Functionally, bifunctional enzyme that catalyzes the enolization of 2,3-diketo-5-methylthiopentyl-1-phosphate (DK-MTP-1-P) into the intermediate 2-hydroxy-3-keto-5-methylthiopentenyl-1-phosphate (HK-MTPenyl-1-P), which is then dephosphorylated to form the acireductone 1,2-dihydroxy-3-keto-5-methylthiopentene (DHK-MTPene). This Xanthomonas oryzae pv. oryzae (strain KACC10331 / KXO85) protein is Enolase-phosphatase E1.